Consider the following 400-residue polypeptide: LIM homeobox transcription factor 1-beta.1 (400 aa).

LIM zinc-binding domains follow at residues 54 to 113 and 114 to 175; these read AVCE…LFAA and KCSG…EKDL. Residues 175–228 are disordered; it reads LLSSGSPDDSDSVKSDDEEGDVKPGKGRVNQGKGSDDGKDPRRPKRPRTILTTQ. Positions 218–277 form a DNA-binding region, homeobox; it reads PKRPRTILTTQQRRAFKASFEVSSKPCRKVRETLAAETGLSVRVVQVWFQNQRAKIKKLA.

In terms of tissue distribution, shows a temporal expression pattern in three main areas: neural, kidney and limbs. From stage 13 onwards, expressed in regions of the nervous system including the placodes and otic vesicles, eye, specific sets of neurons, and in discreet regions of the neural tube. From stage 13, also expressed in the presumptive pronephros, and from stage 27 expression is predominant in the capsule of the pronephric glomus. Also expressed in the developing forelimbs and hindlimbs. In metamorphosing tadpoles, expressed in the eye, brain, muscle and mesonephric kidney.

The protein localises to the nucleus. In terms of biological role, required for early specification of the kidney glomus, lying upstream of wt1 in the pathway controlling glomus differentiation. The balance in levels and expression patterns of binding partners such as lhx1/lim-1 influences differentiation into glomus or tubule derivatives. Involved in specification of serotonergic neurons. This chain is LIM homeobox transcription factor 1-beta.1, found in Xenopus laevis (African clawed frog).